A 92-amino-acid polypeptide reads, in one-letter code: Cell division protein FtsB (92 aa).

At 1-3 the chain is on the cytoplasmic side; it reads MKW. Residues 4–21 form a helical membrane-spanning segment; the sequence is VTVVLSFALVCCQYSLWF. Topologically, residues 22 to 92 are periplasmic; sequence GKGSIGRNSS…TFYRLIRHNR (71 aa). Residues 28–50 adopt a coiled-coil conformation; that stretch reads RNSSLREQIAVQEEKNQTLALRN.

The protein belongs to the FtsB family. Part of a complex composed of FtsB, FtsL and FtsQ.

It is found in the cell inner membrane. Essential cell division protein. May link together the upstream cell division proteins, which are predominantly cytoplasmic, with the downstream cell division proteins, which are predominantly periplasmic. This is Cell division protein FtsB from Neisseria meningitidis serogroup C (strain 053442).